A 336-amino-acid polypeptide reads, in one-letter code: Ornithine carbamoyltransferase, catabolic (336 aa).

Carbamoyl phosphate contacts are provided by residues 57–60 (STRT), glutamine 84, arginine 108, and 135–138 (HPTQ). Residues asparagine 168, aspartate 232, and 236–237 (SM) each bind L-ornithine. Carbamoyl phosphate-binding positions include 274 to 275 (CL) and arginine 321.

Belongs to the aspartate/ornithine carbamoyltransferase superfamily. OTCase family. In terms of assembly, nonameric or dodecamer (tetramer of trimers).

Its subcellular location is the cytoplasm. It catalyses the reaction carbamoyl phosphate + L-ornithine = L-citrulline + phosphate + H(+). It participates in amino-acid degradation; L-arginine degradation via ADI pathway; carbamoyl phosphate from L-arginine: step 2/2. Inhibited by 2-aminopentanoic acid (norvaline). Activated by phosphate and nucleoside monophosphates such as AMP, GMP, CMP, UMP. Allosterically inhibited by the polyamines such as spermidine and putrescine. Functionally, involved in the catabolism of arginine. Catalyzes the phosphorolysis of citrulline, the reverse reaction of the biosynthetic one, yielding ornithine and carbamoyl phosphate which serve to generate ATP from ADP. This catabolic OTCase does not carry out the biosynthetic reaction because of a poor affinity and a marked cooperativity for carbamoyl phosphate. The polypeptide is Ornithine carbamoyltransferase, catabolic (Pseudomonas aeruginosa (strain ATCC 15692 / DSM 22644 / CIP 104116 / JCM 14847 / LMG 12228 / 1C / PRS 101 / PAO1)).